Consider the following 330-residue polypeptide: Phosphate acyltransferase (330 aa).

Belongs to the PlsX family. As to quaternary structure, homodimer. Probably interacts with PlsY.

It is found in the cytoplasm. It catalyses the reaction a fatty acyl-[ACP] + phosphate = an acyl phosphate + holo-[ACP]. Its pathway is lipid metabolism; phospholipid metabolism. Catalyzes the reversible formation of acyl-phosphate (acyl-PO(4)) from acyl-[acyl-carrier-protein] (acyl-ACP). This enzyme utilizes acyl-ACP as fatty acyl donor, but not acyl-CoA. The chain is Phosphate acyltransferase from Lysinibacillus sphaericus (strain C3-41).